A 239-amino-acid chain; its full sequence is Lipoprotein-releasing system ATP-binding protein LolD (239 aa).

In terms of domain architecture, ABC transporter spans 10–239 (VELSGVRKDY…ADGPHRRSGA (230 aa)). ATP is bound at residue 46–53 (GPSGSGKS).

It belongs to the ABC transporter superfamily. Lipoprotein translocase (TC 3.A.1.125) family. As to quaternary structure, the complex is composed of two ATP-binding proteins (LolD) and two transmembrane proteins (LolC and LolE).

It is found in the cell inner membrane. Its function is as follows. Part of the ABC transporter complex LolCDE involved in the translocation of mature outer membrane-directed lipoproteins, from the inner membrane to the periplasmic chaperone, LolA. Responsible for the formation of the LolA-lipoprotein complex in an ATP-dependent manner. The chain is Lipoprotein-releasing system ATP-binding protein LolD from Anaeromyxobacter dehalogenans (strain 2CP-C).